The sequence spans 547 residues: Chaperonin GroEL (547 aa).

Residues 30-33 (TLGP), Lys-51, 87-91 (DGTTT), Gly-415, 479-481 (NAA), and Asp-495 each bind ATP.

This sequence belongs to the chaperonin (HSP60) family. In terms of assembly, forms a cylinder of 14 subunits composed of two heptameric rings stacked back-to-back. Interacts with the co-chaperonin GroES.

The protein localises to the cytoplasm. It carries out the reaction ATP + H2O + a folded polypeptide = ADP + phosphate + an unfolded polypeptide.. In terms of biological role, together with its co-chaperonin GroES, plays an essential role in assisting protein folding. The GroEL-GroES system forms a nano-cage that allows encapsulation of the non-native substrate proteins and provides a physical environment optimized to promote and accelerate protein folding. The sequence is that of Chaperonin GroEL from Marinomonas sp. (strain MWYL1).